Consider the following 90-residue polypeptide: Molybdopterin synthase sulfur carrier subunit (90 aa).

Gly-90 is modified (1-thioglycine; alternate). Position 90 is a glycyl adenylate; alternate (Gly-90).

Belongs to the MoaD family. MOCS2A subfamily. In terms of assembly, heterotetramer; composed of 2 small (Mocs2A) and 2 large (Mocs2B) subunits. Post-translationally, C-terminal thiocarboxylation occurs in 2 steps, it is first acyl-adenylated (-COAMP) via the hesA/moeB/thiF part of MOCS3, then thiocarboxylated (-COSH) via the rhodanese domain of MOCS3.

The protein resides in the cytoplasm. It participates in cofactor biosynthesis; molybdopterin biosynthesis. In terms of biological role, acts as a sulfur carrier required for molybdopterin biosynthesis. Component of the molybdopterin synthase complex that catalyzes the conversion of precursor Z into molybdopterin by mediating the incorporation of 2 sulfur atoms into precursor Z to generate a dithiolene group. In the complex, serves as sulfur donor by being thiocarboxylated (-COSH) at its C-terminus by MOCS3. After interaction with Mocs2B, the sulfur is then transferred to precursor Z to form molybdopterin. In Drosophila erecta (Fruit fly), this protein is Molybdopterin synthase sulfur carrier subunit.